Reading from the N-terminus, the 235-residue chain is Aspartate/glutamate leucyltransferase (235 aa).

The protein belongs to the R-transferase family. Bpt subfamily.

It is found in the cytoplasm. The catalysed reaction is N-terminal L-glutamyl-[protein] + L-leucyl-tRNA(Leu) = N-terminal L-leucyl-L-glutamyl-[protein] + tRNA(Leu) + H(+). The enzyme catalyses N-terminal L-aspartyl-[protein] + L-leucyl-tRNA(Leu) = N-terminal L-leucyl-L-aspartyl-[protein] + tRNA(Leu) + H(+). In terms of biological role, functions in the N-end rule pathway of protein degradation where it conjugates Leu from its aminoacyl-tRNA to the N-termini of proteins containing an N-terminal aspartate or glutamate. This chain is Aspartate/glutamate leucyltransferase, found in Shewanella putrefaciens (strain CN-32 / ATCC BAA-453).